The chain runs to 185 residues: GTP-binding protein rhb1 (185 aa).

Serine 16, glycine 18, lysine 19, serine 20, serine 21, valine 32, tyrosine 35, threonine 38, asparagine 119, aspartate 122, and alanine 150 together coordinate GTP. Position 20 (serine 20) interacts with Mg(2+). Residues 35–43 (YYPTIENTF) carry the Effector region motif. Threonine 38 contributes to the Mg(2+) binding site. Position 182 is a cysteine methyl ester (cysteine 182). Cysteine 182 carries S-farnesyl cysteine lipidation. The propeptide at 183-185 (VIA) is removed in mature form.

The protein belongs to the small GTPase superfamily. Rheb family.

It is found in the cell membrane. The catalysed reaction is GTP + H2O = GDP + phosphate + H(+). Its function is as follows. Binds GTP and exhibits intrinsic GTPase activity. Regulates entry into stationary phase when extracellular nitrogen levels are adequate for growth. The protein is GTP-binding protein rhb1 (rhb1) of Schizosaccharomyces pombe (strain 972 / ATCC 24843) (Fission yeast).